A 2020-amino-acid polypeptide reads, in one-letter code: Metacaspase-2 (2020 aa).

2 stretches are compositionally biased toward basic and acidic residues: residues 51-60 (SENDRNESIQ) and 69-78 (DNRKTNKSEK). 2 disordered regions span residues 51–78 (SEND…KSEK) and 573–614 (RNGN…NINN). Positions 576 to 614 (NINNNKNNNINNNNNNINNNNNNINNNNNNINNNNNINN) are enriched in low complexity.

The protein belongs to the peptidase C14B family.

The protein resides in the cytoplasm. Its activity is regulated as follows. Ca(2+) does not appear to affect catalytic activity. In terms of biological role, protease that cleaves specifically after arginine or lysine residues. May play a role in parasite growth and/or development. The protein is Metacaspase-2 of Plasmodium falciparum (isolate 3D7).